Here is a 352-residue protein sequence, read N- to C-terminus: D-alanine--D-alanine ligase (352 aa).

The ATP-grasp domain maps to 133–342 (KTVFAAAGLP…FPKLVDRLIQ (210 aa)). 169 to 224 (DETIGYPNFVKPANLGSSVGISKVRSRLELEAALDSAASFDRRIVVEAGVVAREVE) lines the ATP pocket. Mg(2+)-binding residues include aspartate 295, glutamate 309, and asparagine 311.

This sequence belongs to the D-alanine--D-alanine ligase family. The cofactor is Mg(2+). It depends on Mn(2+) as a cofactor.

Its subcellular location is the cytoplasm. The enzyme catalyses 2 D-alanine + ATP = D-alanyl-D-alanine + ADP + phosphate + H(+). The protein operates within cell wall biogenesis; peptidoglycan biosynthesis. Its function is as follows. Cell wall formation. This chain is D-alanine--D-alanine ligase, found in Acaryochloris marina (strain MBIC 11017).